Here is a 146-residue protein sequence, read N- to C-terminus: Hemoglobin subunit beta-1 (146 aa).

The 145-residue stretch at 2 to 146 (HWTAEEKSAI…VAHALAHRYH (145 aa)) folds into the Globin domain. Positions 63 and 92 each coordinate heme b.

Belongs to the globin family. As to quaternary structure, heterotetramer of two alpha chains and two beta chains. As to expression, red blood cells.

In terms of biological role, involved in oxygen transport from the lung to the various peripheral tissues. This is Hemoglobin subunit beta-1 from Drymarchon melanurus erebennus (Texas indigo snake).